A 475-amino-acid chain; its full sequence is F-box/kelch-repeat protein At1g22040 (475 aa).

The tract at residues 1 to 28 is disordered; the sequence is MGSVMSLSCSKRKATSQDVECSSESRKR. Residues 41 to 87 enclose the F-box domain; the sequence is CRLIPSLPDELSIQILARLPRICYSSVRLVSRRWRSAVSTSEVYSLR. Kelch repeat units follow at residues 94–140, 182–228, 229–279, 306–350, and 352–401; these read EEWL…KSLS, GLYV…VLNK, KLYV…AFLA, PFFV…VDGE, and YAFD…GFHG.

The chain is F-box/kelch-repeat protein At1g22040 from Arabidopsis thaliana (Mouse-ear cress).